The following is a 28-amino-acid chain: Conotoxin Cl5.3 (28 aa).

It belongs to the conotoxin T superfamily. In terms of processing, contains 2 disulfide bonds that can be either 'C1-C3, C2-C4' or 'C1-C4, C2-C3', since these disulfide connectivities have been observed for conotoxins with cysteine framework V (for examples, see AC P0DQQ7 and AC P81755). In terms of tissue distribution, expressed by the venom duct.

The protein localises to the secreted. The chain is Conotoxin Cl5.3 from Californiconus californicus (California cone).